The sequence spans 156 residues: Small ribosomal subunit protein uS7 (156 aa).

Belongs to the universal ribosomal protein uS7 family. Part of the 30S ribosomal subunit. Contacts proteins S9 and S11.

Functionally, one of the primary rRNA binding proteins, it binds directly to 16S rRNA where it nucleates assembly of the head domain of the 30S subunit. Is located at the subunit interface close to the decoding center, probably blocks exit of the E-site tRNA. In Thermomicrobium roseum (strain ATCC 27502 / DSM 5159 / P-2), this protein is Small ribosomal subunit protein uS7.